We begin with the raw amino-acid sequence, 218 residues long: Thiopurine S-methyltransferase (218 aa).

Positions 10, 45, 66, and 123 each coordinate S-adenosyl-L-methionine.

The protein belongs to the class I-like SAM-binding methyltransferase superfamily. TPMT family.

Its subcellular location is the cytoplasm. The enzyme catalyses S-adenosyl-L-methionine + a thiopurine = S-adenosyl-L-homocysteine + a thiopurine S-methylether.. This Pseudomonas aeruginosa (strain LESB58) protein is Thiopurine S-methyltransferase.